A 111-amino-acid polypeptide reads, in one-letter code: Ig kappa chain V-III region CBPC 101 (111 aa).

Residues 1–23 (DIVLTQSPASLAVSLGQRATISC) form a framework-1 region. The cysteines at positions 23 and 92 are disulfide-linked. A complementarity-determining-1 region spans residues 24-38 (KASQSVDYTGESYMN). The interval 39–53 (WYQQNPGQSPKLLIY) is framework-2. Residues 54-60 (AASNLES) are complementarity-determining-2. A framework-3 region spans residues 61–92 (GIPARFSGSGSGTDFTLNIHPVEEEDAATYYC). Residues 93-101 (QQSNEDPYT) form a complementarity-determining-3 region. The framework-4 stretch occupies residues 102-111 (FGGGTKLEIK).

This chain is Ig kappa chain V-III region CBPC 101, found in Mus musculus (Mouse).